A 176-amino-acid chain; its full sequence is Endoribonuclease YbeY (176 aa).

Zn(2+) is bound by residues His128, His132, and His138.

This sequence belongs to the endoribonuclease YbeY family. It depends on Zn(2+) as a cofactor.

Its subcellular location is the cytoplasm. Functionally, single strand-specific metallo-endoribonuclease involved in late-stage 70S ribosome quality control and in maturation of the 3' terminus of the 16S rRNA. The sequence is that of Endoribonuclease YbeY from Zymomonas mobilis subsp. mobilis (strain ATCC 31821 / ZM4 / CP4).